Consider the following 388-residue polypeptide: S-adenosylmethionine synthase (388 aa).

Histidine 16 is a binding site for ATP. Aspartate 18 provides a ligand contact to Mg(2+). Glutamate 44 provides a ligand contact to K(+). The L-methionine site is built by glutamate 57 and glutamine 100. Positions 100 to 110 (QSPEIAQGVDR) are flexible loop. Residues 165 to 167 (DAK), aspartate 240, 246 to 247 (RK), alanine 263, and lysine 267 contribute to the ATP site. Position 240 (aspartate 240) interacts with L-methionine. Lysine 271 contributes to the L-methionine binding site.

The protein belongs to the AdoMet synthase family. As to quaternary structure, homotetramer; dimer of dimers. The cofactor is Mg(2+). K(+) serves as cofactor.

It localises to the cytoplasm. It catalyses the reaction L-methionine + ATP + H2O = S-adenosyl-L-methionine + phosphate + diphosphate. The protein operates within amino-acid biosynthesis; S-adenosyl-L-methionine biosynthesis; S-adenosyl-L-methionine from L-methionine: step 1/1. In terms of biological role, catalyzes the formation of S-adenosylmethionine (AdoMet) from methionine and ATP. The overall synthetic reaction is composed of two sequential steps, AdoMet formation and the subsequent tripolyphosphate hydrolysis which occurs prior to release of AdoMet from the enzyme. The sequence is that of S-adenosylmethionine synthase from Acinetobacter baumannii (strain AYE).